Consider the following 540-residue polypeptide: Calnexin homolog (540 aa).

The signal sequence occupies residues 1-29; that stretch reads MELSRRKMCCYIQFCCFVLIGCFISQICA. The Lumenal segment spans residues 30–469; sequence SSDAIFYESF…EKAETQPNIT (440 aa). Ca(2+) is bound by residues serine 38 and aspartate 69. Residues cysteine 112 and cysteine 147 are joined by a disulfide bond. The an alpha-D-glucoside site is built by tyrosine 116, lysine 118, tyrosine 138, and aspartate 145. Residues 221–301 form a disordered region; it reads LIPTKTIPDP…DWDDEEDGEW (81 aa). The segment at 227–360 is p domain (Extended arm); the sequence is IPDPDDKKPE…REIPNPDYFE (134 aa). Positions 228-253 are enriched in basic and acidic residues; that stretch reads PDPDDKKPEDWDERAKIPDPEATKPD. A run of 5 repeats spans residues 229 to 240, 246 to 257, 265 to 276, 284 to 295, and 299 to 309. 2 4 X approximate repeats regions span residues 229–295 and 299–356; these read DPDD…DWDD and GEWE…IPNP. Composition is skewed to acidic residues over residues 254–285 and 292–301; these read DWDE…IDDP and DWDDEEDGEW. The cysteines at positions 311 and 317 are disulfide-linked. Tandem repeats lie at residues 318–328, 332–342, and 346–356. Residue glutamate 375 coordinates an alpha-D-glucoside. Ca(2+) is bound at residue aspartate 386. Asparagine 467 carries N-linked (GlcNAc...) asparagine glycosylation. A helical transmembrane segment spans residues 470–490; that stretch reads IGVIVSIIVVIFSILLKLLFG. Over 491–540 the chain is Cytoplasmic; the sequence is GKKAAPKVNVVPKKKEEPEASNTAEVREGEEEKTEGEVAAAPRRRPRRDT. The tract at residues 499–540 is disordered; that stretch reads NVVPKKKEEPEASNTAEVREGEEEKTEGEVAAAPRRRPRRDT.

It belongs to the calreticulin family.

It is found in the endoplasmic reticulum membrane. In terms of biological role, calcium-binding protein that interacts with newly synthesized monoglucosylated glycoproteins in the endoplasmic reticulum. It may act in assisting protein assembly and/or in the retention within the ER of unassembled protein subunits. It seems to play a major role in the quality control apparatus of the ER by the retention of incorrectly folded proteins. This is Calnexin homolog from Helianthus tuberosus (Jerusalem artichoke).